A 226-amino-acid polypeptide reads, in one-letter code: Transmembrane gamma-carboxyglutamic acid protein 4 (226 aa).

Positions 1–17 (MFTLLVLLSQLPTVTLG) are cleaved as a signal peptide. A propeptide spanning residues 18 to 49 (FPHCARGPKASKHAGEEVFTSKEEANFFIHRR) is cleaved from the precursor. Residues 50 to 113 (LLYNRFDLEL…KSDGNREKID (64 aa)) are Extracellular-facing. A Gla domain is found at 52 to 98 (YNRFDLELFTPGNLERECNEELCNYEEAREIFVDEDKTIAFWQEYSA). Cys-69 and Cys-74 are joined by a disulfide. Glu-72 carries the post-translational modification 4-carboxyglutamate. Residues 114–134 (VMGLLTGLIAAGVFLVIFGLL) form a helical membrane-spanning segment. Residues 135-226 (GYYLCITKCN…FKKSMSLPSH (92 aa)) are Cytoplasmic-facing. Position 163 is a phosphoserine (Ser-163). An LPXY motif; mediates binding to WW domain-containing proteins motif is present at residues 186–189 (LPSY). The PPXY motif; mediates binding to WW domain-containing proteins signature appears at 204-207 (PPPY).

The protein belongs to the commissureless family. In terms of assembly, interacts (via cytoplasmic domain) with WW domain-containing proteins MAGI1, MAGI3, NEDD4, NEDD4L, WWTR1/TAZ and YAP1. Post-translationally, gamma-carboxyglutamate residues are formed by vitamin K dependent carboxylation. These residues are essential for the binding of calcium. As to expression, widely expressed with highest levels in kidney.

The protein resides in the endoplasmic reticulum-Golgi intermediate compartment membrane. It localises to the cell membrane. May control axon guidance across the CNS. Prevents the delivery of ROBO1 at the cell surface and down-regulates its expression. The protein is Transmembrane gamma-carboxyglutamic acid protein 4 of Homo sapiens (Human).